We begin with the raw amino-acid sequence, 260 residues long: Acetylglutamate kinase (260 aa).

Residues 45 to 46 (GG), R67, and N159 each bind substrate.

This sequence belongs to the acetylglutamate kinase family. ArgB subfamily.

The protein resides in the cytoplasm. The enzyme catalyses N-acetyl-L-glutamate + ATP = N-acetyl-L-glutamyl 5-phosphate + ADP. It functions in the pathway amino-acid biosynthesis; L-arginine biosynthesis; N(2)-acetyl-L-ornithine from L-glutamate: step 2/4. In terms of biological role, catalyzes the ATP-dependent phosphorylation of N-acetyl-L-glutamate. The sequence is that of Acetylglutamate kinase from Aliivibrio fischeri (strain ATCC 700601 / ES114) (Vibrio fischeri).